A 156-amino-acid chain; its full sequence is ATP synthase subunit b (156 aa).

A helical membrane pass occupies residues 11–31; the sequence is AIAFILFVAFCMKYVWPPLMA.

It belongs to the ATPase B chain family. As to quaternary structure, F-type ATPases have 2 components, F(1) - the catalytic core - and F(0) - the membrane proton channel. F(1) has five subunits: alpha(3), beta(3), gamma(1), delta(1), epsilon(1). F(0) has three main subunits: a(1), b(2) and c(10-14). The alpha and beta chains form an alternating ring which encloses part of the gamma chain. F(1) is attached to F(0) by a central stalk formed by the gamma and epsilon chains, while a peripheral stalk is formed by the delta and b chains.

It is found in the cell inner membrane. F(1)F(0) ATP synthase produces ATP from ADP in the presence of a proton or sodium gradient. F-type ATPases consist of two structural domains, F(1) containing the extramembraneous catalytic core and F(0) containing the membrane proton channel, linked together by a central stalk and a peripheral stalk. During catalysis, ATP synthesis in the catalytic domain of F(1) is coupled via a rotary mechanism of the central stalk subunits to proton translocation. In terms of biological role, component of the F(0) channel, it forms part of the peripheral stalk, linking F(1) to F(0). This is ATP synthase subunit b from Erwinia tasmaniensis (strain DSM 17950 / CFBP 7177 / CIP 109463 / NCPPB 4357 / Et1/99).